Consider the following 1441-residue polypeptide: Probable ubiquitin-conjugating enzyme E2 R521 (1441 aa).

Residues Tyr-20–Met-40 traverse the membrane as a helical segment. Residues Asn-63 to Asp-89 adopt a coiled-coil conformation. Over residues Val-180–Ser-199 the composition is skewed to basic and acidic residues. Disordered regions lie at residues Val-180 to Ile-207 and Ile-283 to Val-305. A compositionally biased stretch (low complexity) spans Lys-286 to Ser-303. The stretch at Thr-340 to Lys-368 forms a coiled coil. Over residues Thr-505–Glu-538 the composition is skewed to low complexity. Disordered stretches follow at residues Thr-505 to Lys-554 and Asn-577 to Gly-605. Residues Val-539–Glu-549 show a composition bias toward acidic residues. A UBC core domain is found at Ala-1217–Met-1380. Cys-1306 functions as the Glycyl thioester intermediate in the catalytic mechanism.

This sequence belongs to the ubiquitin-conjugating enzyme family.

The protein resides in the membrane. The enzyme catalyses S-ubiquitinyl-[E1 ubiquitin-activating enzyme]-L-cysteine + [E2 ubiquitin-conjugating enzyme]-L-cysteine = [E1 ubiquitin-activating enzyme]-L-cysteine + S-ubiquitinyl-[E2 ubiquitin-conjugating enzyme]-L-cysteine.. It participates in protein modification; protein ubiquitination. Its function is as follows. Catalyzes the covalent attachment of ubiquitin to other proteins. The chain is Probable ubiquitin-conjugating enzyme E2 R521 from Acanthamoeba polyphaga (Amoeba).